The chain runs to 222 residues: Probable GTP-binding protein EngB (222 aa).

In terms of domain architecture, EngB-type G spans 22–197; it reads TSAEIAFVGR…ETVVAGWFAG (176 aa). Mg(2+) contacts are provided by Ser37 and Thr59. The interval 201–222 is disordered; that stretch reads RQADELTDGEPDDRTPDPDSAS. The span at 212–222 shows a compositional bias: basic and acidic residues; it reads DDRTPDPDSAS.

Belongs to the TRAFAC class TrmE-Era-EngA-EngB-Septin-like GTPase superfamily. EngB GTPase family. It depends on Mg(2+) as a cofactor.

In terms of biological role, necessary for normal cell division and for the maintenance of normal septation. The chain is Probable GTP-binding protein EngB from Laribacter hongkongensis (strain HLHK9).